We begin with the raw amino-acid sequence, 360 residues long: uncharacterized protein (360 aa).

4 to 22 contacts NAD(+); it reads KVLHIGAGGFGERWCDTFL.

In terms of biological role, could be a NAD-dependent oxidoreductase. This is an uncharacterized protein from Sinorhizobium fredii (strain NBRC 101917 / NGR234).